Consider the following 181-residue polypeptide: UPF0398 protein LMHCC_0668 (181 aa).

It belongs to the UPF0398 family.

This Listeria monocytogenes serotype 4a (strain HCC23) protein is UPF0398 protein LMHCC_0668.